The following is a 526-amino-acid chain: Tyrosine-protein kinase transforming protein Src (526 aa).

The tract at residues methionine 1–glycine 52 is disordered. Residue glycine 2 is the site of N-myristoyl glycine; by host attachment. The span at lysine 7–histidine 25 shows a compositional bias: basic and acidic residues. SH3 domains are found at residues threonine 71–proline 139 and glycine 81–serine 142. One can recognise an SH2 domain in the interval tryptophan 148 to cysteine 245. One can recognise a Protein kinase domain in the interval leucine 267–leucine 517. ATP is bound by residues leucine 273–valine 281 and lysine 295. Aspartate 386 functions as the Proton acceptor in the catalytic mechanism. Position 416 is a phosphotyrosine; by autocatalysis (tyrosine 416).

This sequence belongs to the protein kinase superfamily. Tyr protein kinase family. SRC subfamily. Homodimer. In terms of processing, the phosphorylated form is termed pp60v-src.

The catalysed reaction is L-tyrosyl-[protein] + ATP = O-phospho-L-tyrosyl-[protein] + ADP + H(+). In terms of biological role, this phosphoprotein, required for both the initiation and the maintenance of neoplastic transformation, is a protein kinase that catalyzes the phosphorylation of tyrosine residues in vitro. This Gallus gallus (Chicken) protein is Tyrosine-protein kinase transforming protein Src (V-SRC).